The following is a 725-amino-acid chain: Methionine--tRNA ligase (725 aa).

The short motif at 27 to 37 (PYANGQIHIGH) is the 'HIGH' region element. C158, C161, C171, and C174 together coordinate Zn(2+). The short motif at 348 to 352 (KMSKS) is the 'KMSKS' region element. K351 serves as a coordination point for ATP. A tRNA-binding domain is found at 619-725 (DFAKIDLRIA…SGAKPGMRVK (107 aa)).

Belongs to the class-I aminoacyl-tRNA synthetase family. MetG type 1 subfamily. Homodimer. Zn(2+) is required as a cofactor.

It localises to the cytoplasm. The catalysed reaction is tRNA(Met) + L-methionine + ATP = L-methionyl-tRNA(Met) + AMP + diphosphate. In terms of biological role, is required not only for elongation of protein synthesis but also for the initiation of all mRNA translation through initiator tRNA(fMet) aminoacylation. The polypeptide is Methionine--tRNA ligase (Burkholderia pseudomallei (strain 668)).